Consider the following 275-residue polypeptide: NH(3)-dependent NAD(+) synthetase (275 aa).

Residue 46-53 coordinates ATP; that stretch reads GISGGQDS. D52 serves as a coordination point for Mg(2+). R140 contributes to the deamido-NAD(+) binding site. Residue T160 participates in ATP binding. A Mg(2+)-binding site is contributed by E165. The deamido-NAD(+) site is built by K173 and D180. ATP contacts are provided by K189 and T211. Deamido-NAD(+) is bound at residue 260-261; that stretch reads HK.

It belongs to the NAD synthetase family. As to quaternary structure, homodimer.

The enzyme catalyses deamido-NAD(+) + NH4(+) + ATP = AMP + diphosphate + NAD(+) + H(+). It functions in the pathway cofactor biosynthesis; NAD(+) biosynthesis; NAD(+) from deamido-NAD(+) (ammonia route): step 1/1. In terms of biological role, catalyzes the ATP-dependent amidation of deamido-NAD to form NAD. Uses ammonia as a nitrogen source. The protein is NH(3)-dependent NAD(+) synthetase of Escherichia coli O139:H28 (strain E24377A / ETEC).